The primary structure comprises 542 residues: Peptide chain release factor 3 (542 aa).

A tr-type G domain is found at 14-283 (DKRRNFAIIS…AFLEYALKPG (270 aa)). GTP is bound by residues 23–30 (SHPDAGKT), 91–95 (DTPGH), and 145–148 (NKMD).

Belongs to the TRAFAC class translation factor GTPase superfamily. Classic translation factor GTPase family. PrfC subfamily.

Its subcellular location is the cytoplasm. In terms of biological role, increases the formation of ribosomal termination complexes and stimulates activities of RF-1 and RF-2. It binds guanine nucleotides and has strong preference for UGA stop codons. It may interact directly with the ribosome. The stimulation of RF-1 and RF-2 is significantly reduced by GTP and GDP, but not by GMP. This is Peptide chain release factor 3 from Trichodesmium erythraeum (strain IMS101).